The primary structure comprises 438 residues: Coenzyme A disulfide reductase (438 aa).

Residue 8 to 33 (GAVAGGATCASQIRRLDKESDIIIFE) participates in FAD binding. Substrate contacts are provided by threonine 15, glutamine 19, arginine 22, serine 39, and asparagine 42. Catalysis depends on cysteine 43, which acts as the Nucleophile. The active-site Redox-active is the cysteine 43. Lysine 71 lines the substrate pocket. 151-166 (VLVIGAGYVSLEVLEN) contacts NADP(+). Residue 267–277 (TNVPNIYAIGD) coordinates FAD. Histidine 299 lines the substrate pocket. Residue tyrosine 419 coordinates FAD. Lysine 427 serves as a coordination point for substrate.

This sequence belongs to the class-III pyridine nucleotide-disulfide oxidoreductase family. Homodimer. Requires FAD as cofactor.

The catalysed reaction is NADP(+) + 2 CoA = CoA-disulfide + NADPH + H(+). Functionally, catalyzes specifically the NADPH-dependent reduction of coenzyme A disulfide. This Staphylococcus aureus (strain JH1) protein is Coenzyme A disulfide reductase.